We begin with the raw amino-acid sequence, 213 residues long: MLTVALPKGALLKDSVARFAAAGLDFSAITAADNRQLMLPSACGRARALLVRNGDVPVYVAYGQAQLGVVGYDVLKEQQRTVAQLLDLGFGGCRMAVAVKESSPYRRASDLPAHCRVASKFTSSAQEFFNQLDLPVELIHLTGSVELGPITGISEAIVDLVATGRTLRDNGLIAIEDLFHSTARLIGNPLALRLDTGELNELVQAMEGQGVTP.

The protein belongs to the ATP phosphoribosyltransferase family. Short subfamily. In terms of assembly, heteromultimer composed of HisG and HisZ subunits.

The protein resides in the cytoplasm. The catalysed reaction is 1-(5-phospho-beta-D-ribosyl)-ATP + diphosphate = 5-phospho-alpha-D-ribose 1-diphosphate + ATP. The protein operates within amino-acid biosynthesis; L-histidine biosynthesis; L-histidine from 5-phospho-alpha-D-ribose 1-diphosphate: step 1/9. Catalyzes the condensation of ATP and 5-phosphoribose 1-diphosphate to form N'-(5'-phosphoribosyl)-ATP (PR-ATP). Has a crucial role in the pathway because the rate of histidine biosynthesis seems to be controlled primarily by regulation of HisG enzymatic activity. The chain is ATP phosphoribosyltransferase from Synechococcus sp. (strain RCC307).